A 71-amino-acid polypeptide reads, in one-letter code: Long neurotoxin 1 (71 aa).

5 disulfide bridges follow: C3–C20, C14–C41, C26–C30, C45–C56, and C57–C62.

Belongs to the three-finger toxin family. Long-chain subfamily. Type II alpha-neurotoxin sub-subfamily. Expressed by the venom gland.

Its subcellular location is the secreted. In terms of biological role, binds with high affinity to muscular (alpha-1/CHRNA1) and neuronal (alpha-7/CHRNA7) nicotinic acetylcholine receptor (nAChR) and inhibits acetylcholine from binding to the receptor, thereby impairing neuromuscular and neuronal transmission. The protein is Long neurotoxin 1 of Naja haje haje (Egyptian cobra).